Here is a 399-residue protein sequence, read N- to C-terminus: Elongation factor Tu 1 (399 aa).

Positions Lys10–Glu209 constitute a tr-type G domain. Positions Gly19–Thr26 are G1. GTP is bound at residue Gly19–Thr26. Residue Thr26 coordinates Mg(2+). The interval Gly60–Ala64 is G2. A G3 region spans residues Asp81–Gly84. GTP contacts are provided by residues Asp81–His85 and Asn136–Asp139. Residues Asn136 to Asp139 form a G4 region. Residues Ser174–Leu176 form a G5 region.

Belongs to the TRAFAC class translation factor GTPase superfamily. Classic translation factor GTPase family. EF-Tu/EF-1A subfamily. As to quaternary structure, monomer.

The protein resides in the cytoplasm. It carries out the reaction GTP + H2O = GDP + phosphate + H(+). Its function is as follows. GTP hydrolase that promotes the GTP-dependent binding of aminoacyl-tRNA to the A-site of ribosomes during protein biosynthesis. The polypeptide is Elongation factor Tu 1 (Syntrophotalea carbinolica (strain DSM 2380 / NBRC 103641 / GraBd1) (Pelobacter carbinolicus)).